A 577-amino-acid chain; its full sequence is Proline--tRNA ligase (577 aa).

This sequence belongs to the class-II aminoacyl-tRNA synthetase family. ProS type 1 subfamily. As to quaternary structure, homodimer.

It localises to the cytoplasm. It catalyses the reaction tRNA(Pro) + L-proline + ATP = L-prolyl-tRNA(Pro) + AMP + diphosphate. In terms of biological role, catalyzes the attachment of proline to tRNA(Pro) in a two-step reaction: proline is first activated by ATP to form Pro-AMP and then transferred to the acceptor end of tRNA(Pro). As ProRS can inadvertently accommodate and process non-cognate amino acids such as alanine and cysteine, to avoid such errors it has two additional distinct editing activities against alanine. One activity is designated as 'pretransfer' editing and involves the tRNA(Pro)-independent hydrolysis of activated Ala-AMP. The other activity is designated 'posttransfer' editing and involves deacylation of mischarged Ala-tRNA(Pro). The misacylated Cys-tRNA(Pro) is not edited by ProRS. This chain is Proline--tRNA ligase, found in Helicobacter pylori (strain G27).